Here is a 205-residue protein sequence, read N- to C-terminus: Large ribosomal subunit protein uL4 (205 aa).

Residues 56–76 (VSGTTAKPYRQKHTGRARQGS) are disordered.

This sequence belongs to the universal ribosomal protein uL4 family. As to quaternary structure, part of the 50S ribosomal subunit.

Its function is as follows. One of the primary rRNA binding proteins, this protein initially binds near the 5'-end of the 23S rRNA. It is important during the early stages of 50S assembly. It makes multiple contacts with different domains of the 23S rRNA in the assembled 50S subunit and ribosome. In terms of biological role, forms part of the polypeptide exit tunnel. This chain is Large ribosomal subunit protein uL4, found in Ehrlichia ruminantium (strain Welgevonden).